Reading from the N-terminus, the 482-residue chain is tRNA sulfurtransferase (482 aa).

A THUMP domain is found at 61 to 165 (LAIRDALTRI…DDRLLLIKGR (105 aa)). ATP-binding positions include 183–184 (LI), K265, G287, and Q296. An intrachain disulfide couples C344 to C456. Residues 404–482 (FGPNDVILDI…GFNNVKVYRP (79 aa)) form the Rhodanese domain. The active-site Cysteine persulfide intermediate is C456.

Belongs to the ThiI family.

Its subcellular location is the cytoplasm. The catalysed reaction is [ThiI sulfur-carrier protein]-S-sulfanyl-L-cysteine + a uridine in tRNA + 2 reduced [2Fe-2S]-[ferredoxin] + ATP + H(+) = [ThiI sulfur-carrier protein]-L-cysteine + a 4-thiouridine in tRNA + 2 oxidized [2Fe-2S]-[ferredoxin] + AMP + diphosphate. It catalyses the reaction [ThiS sulfur-carrier protein]-C-terminal Gly-Gly-AMP + S-sulfanyl-L-cysteinyl-[cysteine desulfurase] + AH2 = [ThiS sulfur-carrier protein]-C-terminal-Gly-aminoethanethioate + L-cysteinyl-[cysteine desulfurase] + A + AMP + 2 H(+). The protein operates within cofactor biosynthesis; thiamine diphosphate biosynthesis. Catalyzes the ATP-dependent transfer of a sulfur to tRNA to produce 4-thiouridine in position 8 of tRNAs, which functions as a near-UV photosensor. Also catalyzes the transfer of sulfur to the sulfur carrier protein ThiS, forming ThiS-thiocarboxylate. This is a step in the synthesis of thiazole, in the thiamine biosynthesis pathway. The sulfur is donated as persulfide by IscS. The protein is tRNA sulfurtransferase of Escherichia coli O8 (strain IAI1).